The primary structure comprises 287 residues: Orotidine 5'-phosphate decarboxylase (287 aa).

The Proton donor role is filled by Lys-97.

It belongs to the OMP decarboxylase family. Type 2 subfamily.

It catalyses the reaction orotidine 5'-phosphate + H(+) = UMP + CO2. Its pathway is pyrimidine metabolism; UMP biosynthesis via de novo pathway; UMP from orotate: step 2/2. This Clostridium perfringens (strain ATCC 13124 / DSM 756 / JCM 1290 / NCIMB 6125 / NCTC 8237 / Type A) protein is Orotidine 5'-phosphate decarboxylase.